The sequence spans 295 residues: MEEIEIIHKPVMLKEVIHYLKLSPGKIVVDATLGLGGHSSEILRELKGEGLLIGIDRDEEVLNLARERLRKIANNFVLFNTTYDKVQEILKELKLSFIDAILFDLGFSSFHIEKSERGFSFMRPEEPLDMRYSKDTTLTAADILNSFNELELSNLFWEYGEEPLSRKLAKKIVERRKEKKFVYVKDLLEVVEEVIPKRKRHEATKVFQALRIVVNDEVNILKRALDQIPFILAPRGRIVVLTYHSIEDRVVKNFFKSHSDKIFPVNKKVIRPSVNEIRENRRARSAKLRVGERRE.

S-adenosyl-L-methionine is bound by residues 36–38 (GGH), aspartate 56, leucine 90, aspartate 104, and histidine 111.

It belongs to the methyltransferase superfamily. RsmH family.

It is found in the cytoplasm. It catalyses the reaction cytidine(1402) in 16S rRNA + S-adenosyl-L-methionine = N(4)-methylcytidine(1402) in 16S rRNA + S-adenosyl-L-homocysteine + H(+). Its function is as follows. Specifically methylates the N4 position of cytidine in position 1402 (C1402) of 16S rRNA. This Dictyoglomus turgidum (strain DSM 6724 / Z-1310) protein is Ribosomal RNA small subunit methyltransferase H.